The primary structure comprises 422 residues: Acyl-[acyl-carrier-protein] desaturase 6, chloroplastic (422 aa).

The transit peptide at methionine 1–arginine 46 directs the protein to the chloroplast. Residues glutamate 154, glutamate 192, histidine 195, glutamate 245, glutamate 280, and histidine 283 each coordinate Fe cation.

This sequence belongs to the fatty acid desaturase type 2 family. In terms of assembly, homodimer. Fe(2+) serves as cofactor.

The protein localises to the plastid. It is found in the chloroplast. The protein operates within lipid metabolism; fatty acid metabolism. Introduces a cis double bond in the acyl chain of an acyl-[acyl-carrier protein]. The polypeptide is Acyl-[acyl-carrier-protein] desaturase 6, chloroplastic (Oryza sativa subsp. indica (Rice)).